We begin with the raw amino-acid sequence, 428 residues long: 3-deoxy-D-manno-octulosonic acid transferase (428 aa).

The Proton acceptor role is filled by E64. CMP contacts are provided by residues 274-275, 316-318, and 342-345; these read PR, LGE, and NLIE.

It belongs to the glycosyltransferase group 1 family. Glycosyltransferase 30 subfamily.

Its subcellular location is the cell inner membrane. The enzyme catalyses lipid IVA (E. coli) + CMP-3-deoxy-beta-D-manno-octulosonate = alpha-Kdo-(2-&gt;6)-lipid IVA (E. coli) + CMP + H(+). It functions in the pathway bacterial outer membrane biogenesis; LPS core biosynthesis. Its function is as follows. Involved in lipopolysaccharide (LPS) biosynthesis. Catalyzes the transfer of a single 3-deoxy-D-manno-octulosonate (Kdo) residue from CMP-Kdo to lipid IV(A), the tetraacyldisaccharide-1,4'-bisphosphate precursor of lipid A. The chain is 3-deoxy-D-manno-octulosonic acid transferase (waaA) from Bordetella pertussis.